The following is a 757-amino-acid chain: Polyribonucleotide nucleotidyltransferase (757 aa).

2 residues coordinate Mg(2+): Asp-532 and Asp-538. A KH domain is found at 598-657 (PRVTAIKVPVDKIGEVIGPKGKMINSITEQTGANISIEDDGTVFVGATDGPSAQAAIDMI). Positions 669-738 (GERFLGTVVK…NRGKISLIPV (70 aa)) constitute an S1 motif domain.

The protein belongs to the polyribonucleotide nucleotidyltransferase family. Requires Mg(2+) as cofactor.

It is found in the cytoplasm. It carries out the reaction RNA(n+1) + phosphate = RNA(n) + a ribonucleoside 5'-diphosphate. In terms of biological role, involved in mRNA degradation. Catalyzes the phosphorolysis of single-stranded polyribonucleotides processively in the 3'- to 5'-direction. The sequence is that of Polyribonucleotide nucleotidyltransferase from Rhodococcus jostii (strain RHA1).